The primary structure comprises 339 residues: Phenylalanine--tRNA ligase alpha subunit (339 aa).

Glutamate 254 is a binding site for Mg(2+).

The protein belongs to the class-II aminoacyl-tRNA synthetase family. Phe-tRNA synthetase alpha subunit type 1 subfamily. Tetramer of two alpha and two beta subunits. Mg(2+) serves as cofactor.

The protein localises to the cytoplasm. The catalysed reaction is tRNA(Phe) + L-phenylalanine + ATP = L-phenylalanyl-tRNA(Phe) + AMP + diphosphate + H(+). In Clostridium tetani (strain Massachusetts / E88), this protein is Phenylalanine--tRNA ligase alpha subunit.